Reading from the N-terminus, the 683-residue chain is Protein distal antenna (683 aa).

Positions 7-58 (TKGKRPLRSLTPRDKIHAIQRIHDGESKASVARDIGVPESTLRGWCKNEDKL) constitute an HTH psq-type domain. A DNA-binding region (H-T-H motif) is located at residues 34 to 54 (KASVARDIGVPESTLRGWCKN). 5 disordered regions span residues 220–255 (TANN…SVKN), 336–369 (SPPI…TPSG), 443–525 (SETP…SDCI), 572–597 (NQHS…DEEE), and 652–683 (EPQV…RRRK). Residues 227–242 (SKPSVQPPLQVQSPRS) show a composition bias toward low complexity. Composition is skewed to polar residues over residues 338 to 352 (PIRS…QHAQ) and 445 to 460 (TPSV…NQLD). A compositionally biased stretch (acidic residues) spans 462–478 (IEGDEVTDPDLDAEIEG). Low complexity predominate over residues 575–591 (SNNNDISASNNNNNNSN).

Homomers. Interacts with itself, danr, ey and dac to form a complex (or complexes) containing the RD factors.

The protein resides in the nucleus. Functionally, probable transcription factor with a role in the retinal determination (RD) network. Regulates ato expression and is required for normal R8 induction and differentiation. Danr appears to repress Dan expression, but Dan is required for Danr expression anterior to the morphogenetic furrow (MF). Dan and Danr lie downstream of so and require dac function for highest levels of expression. Contributes to differentiation of antenna-specific characteristics; effector gene that acts downstream of homothorax (hth), Distal-less (Dll), cut (ct) and spineless (ss) genes to control differentiation of distal antennal structures. The chain is Protein distal antenna from Drosophila pseudoobscura pseudoobscura (Fruit fly).